The following is a 132-amino-acid chain: Phosphomevalonate dehydratase small subunit (132 aa).

The active-site Proton acceptor is Ser62.

This sequence belongs to the AcnX type II small subunit family. As to quaternary structure, heterodimer composed of a large subunit (PMDh-L) and a small subunit (PMDh-S).

The catalysed reaction is (R)-5-phosphomevalonate = (2E)-3-methyl-5-phosphooxypent-2-enoate + H2O. It functions in the pathway isoprenoid biosynthesis; isopentenyl diphosphate biosynthesis via mevalonate pathway. Component of a hydro-lyase that catalyzes the dehydration of mevalonate 5-phosphate (MVA5P) to form trans-anhydromevalonate 5-phosphate (tAHMP). Involved in the archaeal mevalonate (MVA) pathway, which provides fundamental precursors for isoprenoid biosynthesis, such as isopentenyl diphosphate (IPP) and dimethylallyl diphosphate (DMAPP). The protein is Phosphomevalonate dehydratase small subunit of Methanocella arvoryzae (strain DSM 22066 / NBRC 105507 / MRE50).